The following is a 239-amino-acid chain: tRNA (guanine-N(7)-)-methyltransferase (239 aa).

Glu-69, Glu-94, Asp-121, and Asp-144 together coordinate S-adenosyl-L-methionine. Asp-144 is a catalytic residue. Lys-148 is a binding site for substrate. The segment at 150–155 (RHNKRR) is interaction with RNA. Substrate contacts are provided by residues Asp-180 and 217–220 (TKFE).

It belongs to the class I-like SAM-binding methyltransferase superfamily. TrmB family. Monomer.

It catalyses the reaction guanosine(46) in tRNA + S-adenosyl-L-methionine = N(7)-methylguanosine(46) in tRNA + S-adenosyl-L-homocysteine. It functions in the pathway tRNA modification; N(7)-methylguanine-tRNA biosynthesis. Catalyzes the formation of N(7)-methylguanine at position 46 (m7G46) in tRNA. In Serratia proteamaculans (strain 568), this protein is tRNA (guanine-N(7)-)-methyltransferase.